The primary structure comprises 687 residues: Pre-mRNA-splicing factor CLF1 (687 aa).

13 HAT repeats span residues 45-77 (EYQR…FEIE), 79-111 (HDMR…AELK), 113-145 (KCIN…VEES), 147-178 (NNVE…FEIR), 180-211 (KNWN…FENR), 213-247 (GNTE…AKLV), 251-283 (AHWE…LKAG), 300-332 (TISY…LISE), 337-369 (QIMQ…LWMR), 383-416 (LEEE…FLIR), 451-483 (KEFD…LEEN), 525-557 (QEFE…YQTS), and 629-661 (LDQE…YIFP).

This sequence belongs to the crooked-neck family. Belongs to the NTC complex (or PRP19-associated complex), composed of at least CEF1, CLF1, ISY1, NTC20, SNT309, SYF1, SYF2, and PRP19. The NTC complex associates with the spliceosome after the release of the U1 and U4 snRNAs and forms the CWC spliceosome subcomplex (or CEF1-associated complex) reminiscent of a late-stage spliceosome composed also of the U2, U5 and U6 snRNAs and at least BUD13, BUD31, BRR2, CDC40, CUS1, CWC2, CWC15, CWC21, CWC22, CWC23, CWC24, CWC25, CWC27, ECM2, HSH155, IST3, LEA1, MSL1, PRP8, PRP9, PRP11, PRP21, PRP22, PRP45, PRP46, SLU7, SMB1, SMD1, SMD2, SMD3, SMX2, SMX3, SNU114, SPP2, RSE1 and YJU2. Interacts with CEF1, ISY1, MUD2, NTC20, PRP22, PRP40, PRP46, SYF1, SYF2, and the ORC2 subunit of the origin recognition complex.

The protein resides in the nucleus. Involved in pre-mRNA splicing and cell cycle progression. Required for the spliceosome assembly by promoting the functional integration of the U4/U6.U5 tri-snRNP particle into the U1-, U2-dependent pre-spliceosome. Also recruits PRP19 to the spliceosome, as a component of the NTC complex (or PRP19-associated complex). The association of the NTC complex to the spliceosome mediates conformational rearrangement or stabilizes the structure of the spliceosome after U4 snRNA dissociation, which leads to spliceosome maturation. Required for initiation of the DNA replication by binding the RNA replication origins, probably through its interaction with the origin recognition complex (ORC). The sequence is that of Pre-mRNA-splicing factor CLF1 (CLF1) from Saccharomyces cerevisiae (strain ATCC 204508 / S288c) (Baker's yeast).